Reading from the N-terminus, the 148-residue chain is Deoxyuridine 5'-triphosphate nucleotidohydrolase (148 aa).

Substrate contacts are provided by residues 67–69 (RSG), Asn80, 84–86 (LID), and Met94.

Belongs to the dUTPase family. Mg(2+) serves as cofactor.

It carries out the reaction dUTP + H2O = dUMP + diphosphate + H(+). It participates in pyrimidine metabolism; dUMP biosynthesis; dUMP from dCTP (dUTP route): step 2/2. In terms of biological role, this enzyme is involved in nucleotide metabolism: it produces dUMP, the immediate precursor of thymidine nucleotides and it decreases the intracellular concentration of dUTP so that uracil cannot be incorporated into DNA. In Paraburkholderia phymatum (strain DSM 17167 / CIP 108236 / LMG 21445 / STM815) (Burkholderia phymatum), this protein is Deoxyuridine 5'-triphosphate nucleotidohydrolase.